Consider the following 314-residue polypeptide: tRNA pseudouridine synthase B (314 aa).

The active-site Nucleophile is D41.

Belongs to the pseudouridine synthase TruB family. Type 1 subfamily.

The enzyme catalyses uridine(55) in tRNA = pseudouridine(55) in tRNA. Its function is as follows. Responsible for synthesis of pseudouridine from uracil-55 in the psi GC loop of transfer RNAs. This is tRNA pseudouridine synthase B from Prochlorococcus marinus (strain NATL1A).